The primary structure comprises 262 residues: Small ribosomal subunit protein uS2 (262 aa).

The tract at residues 240 to 262 (NLDEKEESQEAESTEENTTVESN) is disordered. Residues 243–254 (EKEESQEAESTE) show a composition bias toward acidic residues.

Belongs to the universal ribosomal protein uS2 family.

This Staphylococcus haemolyticus (strain JCSC1435) protein is Small ribosomal subunit protein uS2.